A 339-amino-acid polypeptide reads, in one-letter code: Lipoyl synthase (339 aa).

Positions 13 to 35 (RPKLDAPARPRHPEKAHRPDTAI) are disordered. [4Fe-4S] cluster-binding residues include Cys-68, Cys-73, Cys-79, Cys-94, Cys-98, Cys-101, and Ser-307. The Radical SAM core domain maps to 80–296 (WEKRHATFMI…ETTAYAKGFL (217 aa)).

Belongs to the radical SAM superfamily. Lipoyl synthase family. Requires [4Fe-4S] cluster as cofactor.

It localises to the cytoplasm. It carries out the reaction [[Fe-S] cluster scaffold protein carrying a second [4Fe-4S](2+) cluster] + N(6)-octanoyl-L-lysyl-[protein] + 2 oxidized [2Fe-2S]-[ferredoxin] + 2 S-adenosyl-L-methionine + 4 H(+) = [[Fe-S] cluster scaffold protein] + N(6)-[(R)-dihydrolipoyl]-L-lysyl-[protein] + 4 Fe(3+) + 2 hydrogen sulfide + 2 5'-deoxyadenosine + 2 L-methionine + 2 reduced [2Fe-2S]-[ferredoxin]. It functions in the pathway protein modification; protein lipoylation via endogenous pathway; protein N(6)-(lipoyl)lysine from octanoyl-[acyl-carrier-protein]: step 2/2. Its function is as follows. Catalyzes the radical-mediated insertion of two sulfur atoms into the C-6 and C-8 positions of the octanoyl moiety bound to the lipoyl domains of lipoate-dependent enzymes, thereby converting the octanoylated domains into lipoylated derivatives. This Methylorubrum extorquens (strain CM4 / NCIMB 13688) (Methylobacterium extorquens) protein is Lipoyl synthase.